Consider the following 398-residue polypeptide: Tryptophan synthase beta chain (398 aa).

The residue at position 90 (lysine 90) is an N6-(pyridoxal phosphate)lysine.

It belongs to the TrpB family. Tetramer of two alpha and two beta chains. It depends on pyridoxal 5'-phosphate as a cofactor.

It carries out the reaction (1S,2R)-1-C-(indol-3-yl)glycerol 3-phosphate + L-serine = D-glyceraldehyde 3-phosphate + L-tryptophan + H2O. The protein operates within amino-acid biosynthesis; L-tryptophan biosynthesis; L-tryptophan from chorismate: step 5/5. Functionally, the beta subunit is responsible for the synthesis of L-tryptophan from indole and L-serine. The protein is Tryptophan synthase beta chain of Anoxybacillus flavithermus (strain DSM 21510 / WK1).